Reading from the N-terminus, the 238-residue chain is 2-C-methyl-D-erythritol 4-phosphate cytidylyltransferase (238 aa).

It belongs to the IspD/TarI cytidylyltransferase family. IspD subfamily.

The catalysed reaction is 2-C-methyl-D-erythritol 4-phosphate + CTP + H(+) = 4-CDP-2-C-methyl-D-erythritol + diphosphate. It participates in isoprenoid biosynthesis; isopentenyl diphosphate biosynthesis via DXP pathway; isopentenyl diphosphate from 1-deoxy-D-xylulose 5-phosphate: step 2/6. Catalyzes the formation of 4-diphosphocytidyl-2-C-methyl-D-erythritol from CTP and 2-C-methyl-D-erythritol 4-phosphate (MEP). This Leptospira interrogans serogroup Icterohaemorrhagiae serovar copenhageni (strain Fiocruz L1-130) protein is 2-C-methyl-D-erythritol 4-phosphate cytidylyltransferase.